Here is a 585-residue protein sequence, read N- to C-terminus: Cytochrome c lysine N-methyltransferase 1 (585 aa).

The SET domain occupies 18–273; sequence KSLSLKPSTI…KPIEVFISYS (256 aa). The segment at 186–288 is SET-like; the sequence is LNLSDIKHLY…FSMLVTYGFT (103 aa).

This sequence belongs to the class V-like SAM-binding methyltransferase superfamily.

It is found in the cytoplasm. The protein localises to the cytosol. It carries out the reaction L-lysyl-[cytochrome c] + S-adenosyl-L-methionine = N(6)-methyl-L-lysyl-[cytochrome c] + S-adenosyl-L-homocysteine + H(+). Methyltransferase which mediates trimethylation of 'Lys-78' of cytochrome c (CYC1). The chain is Cytochrome c lysine N-methyltransferase 1 (CTM1) from Saccharomyces cerevisiae (strain ATCC 204508 / S288c) (Baker's yeast).